The sequence spans 241 residues: Serine protease 58 (241 aa).

The first 17 residues, 1-17, serve as a signal peptide directing secretion; it reads MKFILLWALLNLTVALA. The Peptidase S1 domain maps to 18 to 239; sequence FNPDYTVSST…YIPWIENVIQ (222 aa). Cysteines 41 and 57 form a disulfide. Catalysis depends on charge relay system residues His56 and Asp101. Cystine bridges form between Cys133/Cys201, Cys165/Cys180, and Cys191/Cys215. N-linked (GlcNAc...) asparagine glycosylation is found at Asn156 and Asn173. Residue Ser195 is the Charge relay system of the active site.

The protein belongs to the peptidase S1 family.

The protein localises to the secreted. The catalysed reaction is Preferential cleavage: Arg-|-Xaa, Lys-|-Xaa.. The chain is Serine protease 58 (PRSS58) from Homo sapiens (Human).